A 395-amino-acid polypeptide reads, in one-letter code: uncharacterized protein (395 aa).

Residues 115 to 144 are disordered; that stretch reads TKPPTEGGPEKDQSSPSQTQAAPQGPSTAS. The span at 128-141 shows a compositional bias: low complexity; it reads SSPSQTQAAPQGPS.

This is an uncharacterized protein from Homo sapiens (Human).